The sequence spans 118 residues: Basic phospholipase A2 2 (118 aa).

7 disulfides stabilise this stretch: C11-C71, C27-C117, C29-C45, C44-C98, C51-C91, C60-C84, and C78-C89. Ca(2+) contacts are provided by Y28, G30, and G32. The active site involves H48. Position 49 (D49) interacts with Ca(2+). D92 is an active-site residue.

Belongs to the phospholipase A2 family. Group I subfamily. D49 sub-subfamily. The cofactor is Ca(2+). Expressed by the venom gland.

Its subcellular location is the secreted. The catalysed reaction is a 1,2-diacyl-sn-glycero-3-phosphocholine + H2O = a 1-acyl-sn-glycero-3-phosphocholine + a fatty acid + H(+). Its function is as follows. Snake venom phospholipase A2 (PLA2) that inhibits neuromuscular transmission by blocking acetylcholine release from the nerve termini. PLA2 catalyzes the calcium-dependent hydrolysis of the 2-acyl groups in 3-sn-phosphoglycerides. In Laticauda colubrina (Yellow-lipped sea krait), this protein is Basic phospholipase A2 2.